A 568-amino-acid polypeptide reads, in one-letter code: Multidrug and toxin extrusion protein 1 (568 aa).

Met-1 carries the N-acetylmethionine modification. The Cytoplasmic segment spans residues 1–36; that stretch reads MEAPVELGPGGRQASPERRHWLRCLVLSDFREELRA. Residues 37 to 57 form a helical membrane-spanning segment; the sequence is LLVLACPAFLAQLMVFLISFV. At 58-71 the chain is on the extracellular side; the sequence is SSVFCGHLSKLELN. Residues 72–92 traverse the membrane as a helical segment; sequence AVTLAIAVINVMGVSVGFGLS. The Cytoplasmic segment spans residues 93-119; that stretch reads SACDTLISQTYGSRNLKHVGVILQRGS. Residues 120 to 140 form a helical membrane-spanning segment; sequence LILLLCCLPCWALFLNTQHIL. At 141 to 151 the chain is on the extracellular side; sequence LLFRQDPAVSR. A helical transmembrane segment spans residues 152–172; sequence LTQTYVTIFIPALPATFLYTL. Topologically, residues 173 to 175 are cytoplasmic; sequence QVK. Residues 176-196 traverse the membrane as a helical segment; the sequence is YLLNQGIVLPQVVTGVAANLV. The Extracellular portion of the chain corresponds to 197-214; it reads NALANYLFVYQLHLGVMG. The chain crosses the membrane as a helical span at residues 215–235; that stretch reads SALANTVAQFTLALLLFLYIL. The Cytoplasmic portion of the chain corresponds to 236–255; it reads RSKVYQATWGGWSLECLQDW. The chain crosses the membrane as a helical span at residues 256-278; the sequence is ASFFRLAIPSMLMLCMEWWAYEI. Residues 279–294 are Extracellular-facing; the sequence is GSFLSGILGMVELGAQ. Residues 295–315 traverse the membrane as a helical segment; it reads SVTYELAVIVYMIPMGLSVAV. The Cytoplasmic portion of the chain corresponds to 316-335; the sequence is NVRVGNALGAGNIEQAKKSS. Residues 336-356 form a helical membrane-spanning segment; sequence AVALLVTELIAVVFCVMLLSC. Topologically, residues 357–369 are extracellular; the sequence is KDLVGYIFTSDRD. Residues 370 to 390 traverse the membrane as a helical segment; sequence IIALVAQVTPIYAVSHLFESL. The Cytoplasmic portion of the chain corresponds to 391–407; it reads AGTSGGILRGSGNQKFG. Residues 408-430 form a helical membrane-spanning segment; sequence AIVNAIGYYVVGLPIGIALMFAA. At 431 to 433 the chain is on the extracellular side; the sequence is KLG. The helical transmembrane segment at 434-456 threads the bilayer; sequence VIGLWLGIVVCAVSQAVCFLGFI. Topologically, residues 457-544 are cytoplasmic; sequence ARLNWTKACQ…LSGKQLALRR (88 aa). Residues 545 to 565 traverse the membrane as a helical segment; sequence GLLLLGVILVLLAGILVKVYV. Residues 566–568 are Extracellular-facing; the sequence is RTQ.

It belongs to the multi antimicrobial extrusion (MATE) (TC 2.A.66.1) family. In terms of tissue distribution, predominantly expressed in kidney and liver.

It localises to the cell membrane. The protein localises to the apical cell membrane. The catalysed reaction is thiamine(out) + H(+)(in) = thiamine(in) + H(+)(out). It catalyses the reaction estrone 3-sulfate(in) + H(+)(out) = estrone 3-sulfate(out) + H(+)(in). The enzyme catalyses creatinine(in) + H(+)(out) = creatinine(out) + H(+)(in). It carries out the reaction agmatine(in) + H(+)(out) = agmatine(out) + H(+)(in). Functionally, multidrug efflux pump that functions as a H(+)/organic cation antiporter. Plays a physiological role in the excretion of cationic compounds including endogenous metabolites, drugs, toxins through the kidney and liver, into urine and bile respectively. Mediates the efflux of endogenous compounds such as creatinine, vitamin B1/thiamine, agmatine and estrone-3-sulfate. May also contribute to regulate the transport of cationic compounds in testis across the blood-testis-barrier. This is Multidrug and toxin extrusion protein 1 (SLC47A1) from Oryctolagus cuniculus (Rabbit).